The primary structure comprises 432 residues: MEKITLAPISRVEGEINLPGSKSLSNRALLLAALAKGTTKVTNLLDSDDIRHMLNALKALGVNYSLSEDKTVCTVEGVGGAFNWKNGLALFLGNAGTAMRPLTAALCLKGSSEAEVVLTGEPRMKERPIKHLVDALRQAGASVQYLENEGYPPVAIRNSGLKGGKVQIDGSISSQFLTALLMAAPLAEGDMEIEIIGELVSKPYIDITLAMMKDFGVKVENRNYQTFVVKGNQSYLSPEKYLVEGDASSASYFLAAGAIKGKVKVTGIGKNSIQGDRLFANVLEAMGAKITWGDDFIQAEQGKLKGVDMDMNHIPDAAMTIATAALFAEGETVIRNIYNWRVKETDRLTAMATELRKVGATVEEGEDFIRIQPLPLTQFQHAEIATYNDHRMAMCFSLIALSDTPVTILDPKCTAKTFPTYFTEFEKLSERT.

3-phosphoshikimate contacts are provided by Lys-22, Ser-23, and Arg-27. Residue Lys-22 coordinates phosphoenolpyruvate. Positions 96 and 127 each coordinate phosphoenolpyruvate. Residues Ser-173, Ser-174, Gln-175, Ser-201, Asp-316, Asn-339, and Lys-343 each contribute to the 3-phosphoshikimate site. Gln-175 contacts phosphoenolpyruvate. Asp-316 (proton acceptor) is an active-site residue. Phosphoenolpyruvate is bound by residues Arg-347, Arg-391, and Lys-416.

Belongs to the EPSP synthase family. As to quaternary structure, monomer.

It is found in the cytoplasm. The enzyme catalyses 3-phosphoshikimate + phosphoenolpyruvate = 5-O-(1-carboxyvinyl)-3-phosphoshikimate + phosphate. Its pathway is metabolic intermediate biosynthesis; chorismate biosynthesis; chorismate from D-erythrose 4-phosphate and phosphoenolpyruvate: step 6/7. In terms of biological role, catalyzes the transfer of the enolpyruvyl moiety of phosphoenolpyruvate (PEP) to the 5-hydroxyl of shikimate-3-phosphate (S3P) to produce enolpyruvyl shikimate-3-phosphate and inorganic phosphate. The chain is 3-phosphoshikimate 1-carboxyvinyltransferase from Actinobacillus pleuropneumoniae serotype 5b (strain L20).